A 247-amino-acid chain; its full sequence is Granulin (247 aa).

This sequence belongs to the polyhedrin family.

Functionally, component of the virus occlusion bodies, which are large proteinaceous structures, that protect the virus from the outside environment for extended periods until they are ingested by insect larvae. The sequence is that of Granulin from Pieris brassicae granulosis virus (PbGV).